Here is a 271-residue protein sequence, read N- to C-terminus: Mannosyl-3-phosphoglycerate phosphatase (271 aa).

Residue aspartate 13 is the Nucleophile of the active site. Mg(2+) is bound by residues aspartate 13, aspartate 15, and aspartate 214.

The protein belongs to the HAD-like hydrolase superfamily. MPGP family. The cofactor is Mg(2+).

The protein resides in the cytoplasm. It carries out the reaction 2-O-(alpha-D-mannosyl)-3-phosphoglycerate + H2O = (2R)-2-O-(alpha-D-mannosyl)-glycerate + phosphate. This is Mannosyl-3-phosphoglycerate phosphatase (yedP) from Shigella sonnei (strain Ss046).